The primary structure comprises 201 residues: Superoxide dismutase [Mn] (201 aa).

Residues His27, His81, Asp163, and His167 each coordinate Mn(2+).

Belongs to the iron/manganese superoxide dismutase family. Homodimer. It depends on Mn(2+) as a cofactor.

Its subcellular location is the secreted. It carries out the reaction 2 superoxide + 2 H(+) = H2O2 + O2. Its function is as follows. Destroys superoxide anion radicals which are normally produced within the cells and which are toxic to biological systems. The protein is Superoxide dismutase [Mn] (sodA) of Streptococcus pyogenes serotype M1.